The chain runs to 272 residues: 4-hydroxy-tetrahydrodipicolinate reductase (272 aa).

NAD(+) contacts are provided by residues 12–17 (GAAGRM) and glutamate 38. An NADP(+)-binding site is contributed by arginine 39. NAD(+) is bound by residues 102 to 104 (GTT) and 126 to 129 (SGNM). The active-site Proton donor/acceptor is histidine 160. Histidine 161 is a binding site for (S)-2,3,4,5-tetrahydrodipicolinate. Lysine 164 acts as the Proton donor in catalysis. A (S)-2,3,4,5-tetrahydrodipicolinate-binding site is contributed by 170–171 (GT).

Belongs to the DapB family.

Its subcellular location is the cytoplasm. The enzyme catalyses (S)-2,3,4,5-tetrahydrodipicolinate + NAD(+) + H2O = (2S,4S)-4-hydroxy-2,3,4,5-tetrahydrodipicolinate + NADH + H(+). It catalyses the reaction (S)-2,3,4,5-tetrahydrodipicolinate + NADP(+) + H2O = (2S,4S)-4-hydroxy-2,3,4,5-tetrahydrodipicolinate + NADPH + H(+). The protein operates within amino-acid biosynthesis; L-lysine biosynthesis via DAP pathway; (S)-tetrahydrodipicolinate from L-aspartate: step 4/4. Catalyzes the conversion of 4-hydroxy-tetrahydrodipicolinate (HTPA) to tetrahydrodipicolinate. The chain is 4-hydroxy-tetrahydrodipicolinate reductase from Sinorhizobium medicae (strain WSM419) (Ensifer medicae).